Reading from the N-terminus, the 503-residue chain is Adenosine deaminase 2-A (503 aa).

The first 24 residues, 1 to 24 (MHVLFLGDLMWIYLLLLCCASCNG), serve as a signal peptide directing secretion. Residues His105 and His107 each contribute to the Zn(2+) site. Asp108 provides a ligand contact to substrate. Asn120 carries N-linked (GlcNAc...) asparagine glycosylation. An intrachain disulfide couples Cys130 to Cys152. 2 N-linked (GlcNAc...) asparagine glycosylation sites follow: Asn167 and Asn178. Substrate contacts are provided by residues 197 to 204 (WERFEQVF) and His286. N-linked (GlcNAc...) asparagine glycosylation is present at Asn290. Residue Gly319 participates in substrate binding. Residue His349 coordinates Zn(2+). Glu352 serves as the catalytic Proton donor. Asn371 carries an N-linked (GlcNAc...) asparagine glycan. The active-site Proton acceptor is His377. Zn(2+) is bound at residue Asp434. Asp435 provides a ligand contact to substrate.

The protein belongs to the metallo-dependent hydrolases superfamily. Adenosine and AMP deaminases family. ADGF subfamily. The cofactor is Zn(2+).

Its subcellular location is the secreted. It carries out the reaction adenosine + H2O + H(+) = inosine + NH4(+). Its function is as follows. Adenosine deaminase that may contribute to the degradation of extracellular adenosine, a signaling molecule that controls a variety of cellular responses. May play a role in the regulation of cell proliferation. This chain is Adenosine deaminase 2-A, found in Danio rerio (Zebrafish).